Here is a 187-residue protein sequence, read N- to C-terminus: UPF0301 protein YE3428 (187 aa).

The protein belongs to the UPF0301 (AlgH) family.

This chain is UPF0301 protein YE3428, found in Yersinia enterocolitica serotype O:8 / biotype 1B (strain NCTC 13174 / 8081).